The primary structure comprises 419 residues: Phosphoribosylamine--glycine ligase (419 aa).

One can recognise an ATP-grasp domain in the interval Lys109–Glu311. Ala135–Ser191 is a binding site for ATP. The Mg(2+) site is built by Glu281 and Asn283.

Belongs to the GARS family. Mg(2+) is required as a cofactor. The cofactor is Mn(2+).

It catalyses the reaction 5-phospho-beta-D-ribosylamine + glycine + ATP = N(1)-(5-phospho-beta-D-ribosyl)glycinamide + ADP + phosphate + H(+). The protein operates within purine metabolism; IMP biosynthesis via de novo pathway; N(1)-(5-phospho-D-ribosyl)glycinamide from 5-phospho-alpha-D-ribose 1-diphosphate: step 2/2. In Synechocystis sp. (strain ATCC 27184 / PCC 6803 / Kazusa), this protein is Phosphoribosylamine--glycine ligase.